The following is a 426-amino-acid chain: Serine--tRNA ligase (426 aa).

231–233 (TLE) provides a ligand contact to L-serine. ATP is bound at residue 262 to 264 (RSE). E285 serves as a coordination point for L-serine. 349-352 (EISS) lines the ATP pocket. Residue S385 coordinates L-serine.

It belongs to the class-II aminoacyl-tRNA synthetase family. Type-1 seryl-tRNA synthetase subfamily. As to quaternary structure, homodimer. The tRNA molecule binds across the dimer.

The protein localises to the cytoplasm. It carries out the reaction tRNA(Ser) + L-serine + ATP = L-seryl-tRNA(Ser) + AMP + diphosphate + H(+). It catalyses the reaction tRNA(Sec) + L-serine + ATP = L-seryl-tRNA(Sec) + AMP + diphosphate + H(+). The protein operates within aminoacyl-tRNA biosynthesis; selenocysteinyl-tRNA(Sec) biosynthesis; L-seryl-tRNA(Sec) from L-serine and tRNA(Sec): step 1/1. In terms of biological role, catalyzes the attachment of serine to tRNA(Ser). Is also able to aminoacylate tRNA(Sec) with serine, to form the misacylated tRNA L-seryl-tRNA(Sec), which will be further converted into selenocysteinyl-tRNA(Sec). The protein is Serine--tRNA ligase of Malacoplasma penetrans (strain HF-2) (Mycoplasma penetrans).